The following is a 435-amino-acid chain: Endosome-associated-trafficking regulator 1 (435 aa).

Ser-18 and Ser-147 each carry phosphoserine. Disordered regions lie at residues 136 to 185 (ASRH…TGWS) and 225 to 251 (ESLP…PSAD). Positions 173–182 (LLDEEEDEDT) are enriched in acidic residues. Residues 173–198 (LLDEEEDEDTGWSGAYLPSAIEQTHP) are required for interaction with PTPN13. Residues 240 to 250 (SPASPAGSPSA) are compositionally biased toward low complexity. Phosphoserine occurs at positions 243 and 247. The stretch at 261 to 371 (DRHLRTLQIS…FQRENEALRC (111 aa)) forms a coiled coil.

The protein belongs to the ENTR1 family. Found in a complex with ENTR1, PTPN13 and GIT1. Interacts with PTPN13 (via the FERM domain). Interacts (via N-terminus) with GIT1 (via N- and C-terminus); this interaction is direct. Interacts with NOD2. Interacts (via N-terminus) with IFT88. Interacts with VPS35. Post-translationally, phosphorylated. As to expression, expressed in the colon (at protein level).

The protein resides in the cytoplasm. It localises to the early endosome. It is found in the endosome. Its subcellular location is the recycling endosome. The protein localises to the midbody. The protein resides in the cytoskeleton. It localises to the microtubule organizing center. It is found in the centrosome. Its subcellular location is the cilium basal body. Its function is as follows. Endosome-associated protein that plays a role in membrane receptor sorting, cytokinesis and ciliogenesis. Involved in the endosome-to-plasma membrane trafficking and recycling of SNX27-retromer-dependent cargo proteins, such as GLUT1. Involved in the regulation of cytokinesis; the function may involve PTPN13 and GIT1. Plays a role in the formation of cilia. Involved in cargo protein localization, such as PKD2, at primary cilia. Involved in the presentation of the tumor necrosis factor (TNF) receptor TNFRSF1A on the cell surface, and hence in the modulation of the TNF-induced apoptosis. The sequence is that of Endosome-associated-trafficking regulator 1 from Homo sapiens (Human).